The primary structure comprises 118 residues: Large ribosomal subunit protein bL17 (118 aa).

It belongs to the bacterial ribosomal protein bL17 family. As to quaternary structure, part of the 50S ribosomal subunit. Contacts protein L32.

In Campylobacter hominis (strain ATCC BAA-381 / DSM 21671 / CCUG 45161 / LMG 19568 / NCTC 13146 / CH001A), this protein is Large ribosomal subunit protein bL17.